Here is a 418-residue protein sequence, read N- to C-terminus: Histidine--tRNA ligase (418 aa).

Belongs to the class-II aminoacyl-tRNA synthetase family. In terms of assembly, homodimer.

It localises to the cytoplasm. It carries out the reaction tRNA(His) + L-histidine + ATP = L-histidyl-tRNA(His) + AMP + diphosphate + H(+). In Thermoanaerobacter sp. (strain X514), this protein is Histidine--tRNA ligase.